A 435-amino-acid polypeptide reads, in one-letter code: Methylenetetrahydrofolate--tRNA-(uracil-5-)-methyltransferase TrmFO (435 aa).

9 to 14 (GAGLAG) is a binding site for FAD.

The protein belongs to the MnmG family. TrmFO subfamily. The cofactor is FAD.

Its subcellular location is the cytoplasm. The enzyme catalyses uridine(54) in tRNA + (6R)-5,10-methylene-5,6,7,8-tetrahydrofolate + NADH + H(+) = 5-methyluridine(54) in tRNA + (6S)-5,6,7,8-tetrahydrofolate + NAD(+). It carries out the reaction uridine(54) in tRNA + (6R)-5,10-methylene-5,6,7,8-tetrahydrofolate + NADPH + H(+) = 5-methyluridine(54) in tRNA + (6S)-5,6,7,8-tetrahydrofolate + NADP(+). In terms of biological role, catalyzes the folate-dependent formation of 5-methyl-uridine at position 54 (M-5-U54) in all tRNAs. The chain is Methylenetetrahydrofolate--tRNA-(uracil-5-)-methyltransferase TrmFO from Staphylococcus epidermidis (strain ATCC 35984 / DSM 28319 / BCRC 17069 / CCUG 31568 / BM 3577 / RP62A).